The chain runs to 160 residues: Cytochrome b6-f complex subunit 4 (160 aa).

Transmembrane regions (helical) follow at residues 36-56 (LLYI…GLAV), 95-115 (LLGI…PFIE), and 131-151 (TVFL…ALPI).

It belongs to the cytochrome b family. PetD subfamily. In terms of assembly, the 4 large subunits of the cytochrome b6-f complex are cytochrome b6, subunit IV (17 kDa polypeptide, PetD), cytochrome f and the Rieske protein, while the 4 small subunits are PetG, PetL, PetM and PetN. The complex functions as a dimer.

It localises to the cellular thylakoid membrane. Functionally, component of the cytochrome b6-f complex, which mediates electron transfer between photosystem II (PSII) and photosystem I (PSI), cyclic electron flow around PSI, and state transitions. The chain is Cytochrome b6-f complex subunit 4 from Parasynechococcus marenigrum (strain WH8102).